Reading from the N-terminus, the 182-residue chain is ATP synthase subunit b, chloroplastic (182 aa).

The helical transmembrane segment at 31–53 (IINISVVLGVLVYFGKGVLSNLL) threads the bilayer.

This sequence belongs to the ATPase B chain family. In terms of assembly, F-type ATPases have 2 components, F(1) - the catalytic core - and F(0) - the membrane proton channel. F(1) has five subunits: alpha(3), beta(3), gamma(1), delta(1), epsilon(1). F(0) has four main subunits: a(1), b(1), b'(1) and c(10-14). The alpha and beta chains form an alternating ring which encloses part of the gamma chain. F(1) is attached to F(0) by a central stalk formed by the gamma and epsilon chains, while a peripheral stalk is formed by the delta, b and b' chains.

It is found in the plastid. Its subcellular location is the chloroplast thylakoid membrane. F(1)F(0) ATP synthase produces ATP from ADP in the presence of a proton or sodium gradient. F-type ATPases consist of two structural domains, F(1) containing the extramembraneous catalytic core and F(0) containing the membrane proton channel, linked together by a central stalk and a peripheral stalk. During catalysis, ATP synthesis in the catalytic domain of F(1) is coupled via a rotary mechanism of the central stalk subunits to proton translocation. In terms of biological role, component of the F(0) channel, it forms part of the peripheral stalk, linking F(1) to F(0). The chain is ATP synthase subunit b, chloroplastic from Welwitschia mirabilis (Tree tumbo).